The chain runs to 315 residues: MSSEVETSEGVDESEKNSMAPEKENHTKMADLSELLKEGTKEAHDRAENTQFVKDFLKGNIKKELFKLATTALYFTYSALEEEMDRNKDHPAFAPLYFPTELHRKAALIKDMKYFFGENWEEQVKCSEAAQKYVDRIHYVGQNEPELLVAHAYTRYMGDLSGGQVLKKVAQRALKLPSTGEGTQFYLFEHVDNAQQFKQFYRARMNALDLNLKTKERIVEEANKAFEYNMQIFSELDQAGSMLARETLEDGLPVHDGKGDIRKCPFYAAQPDKGTLGGSNCPFQTTVAVLRKPSLQLILAASVALVAGLLAWYYM.

Positions 1-12 are enriched in acidic residues; the sequence is MSSEVETSEGVD. Positions 1 to 28 are disordered; the sequence is MSSEVETSEGVDESEKNSMAPEKENHTK. An N-acetylserine modification is found at Ser-2. Position 2 is a phosphoserine (Ser-2). At 2-294 the chain is on the cytoplasmic side; that stretch reads SSEVETSEGV…TTVAVLRKPS (293 aa). The span at 13 to 28 shows a compositional bias: basic and acidic residues; that stretch reads ESEKNSMAPEKENHTK. Residues His-44, Tyr-153, Lys-198, and Arg-202 each coordinate heme b. HRM repeat units lie at residues 263 to 268 and 280 to 285; these read KCPFYA and NCPFQT. S-nitrosocysteine occurs at positions 264 and 281. A helical; Anchor for type IV membrane protein membrane pass occupies residues 295-315; it reads LQLILAASVALVAGLLAWYYM.

This sequence belongs to the heme oxygenase family. A soluble form arises by proteolytic removal of the membrane anchor. In terms of processing, S-nitrosylated by BLVRB. As to expression, ubiquitous.

It localises to the microsome membrane. Its subcellular location is the endoplasmic reticulum membrane. It catalyses the reaction heme b + 3 reduced [NADPH--hemoprotein reductase] + 3 O2 = biliverdin IXalpha + CO + Fe(2+) + 3 oxidized [NADPH--hemoprotein reductase] + 3 H2O + H(+). Its function is as follows. Catalyzes the oxidative cleavage of heme at the alpha-methene bridge carbon, released as carbon monoxide (CO), to generate biliverdin IXalpha, while releasing the central heme iron chelate as ferrous iron. In Mus musculus (Mouse), this protein is Heme oxygenase 2 (Hmox2).